The primary structure comprises 258 residues: Regulatory protein RecX (258 aa).

Belongs to the RecX family.

Its subcellular location is the cytoplasm. Its function is as follows. Modulates RecA activity. This Streptococcus pneumoniae (strain 70585) protein is Regulatory protein RecX.